Here is a 323-residue protein sequence, read N- to C-terminus: Apolipoprotein E (323 aa).

A signal peptide spans 1–18; it reads MKVLWAALVVTLLAGCWA. 8 repeat units span residues 86-107, 108-129, 130-151, 152-173, 174-195, 196-217, 218-239, and 240-261. Residues 86-261 form an 8 X 22 AA approximate tandem repeats region; it reads ALMDETMKEV…HLEEMREQIQ (176 aa). A Methionine sulfoxide modification is found at Met149. Residue Ser153 is modified to Phosphoserine. The interval 164–174 is LDL and other lipoprotein receptors binding; that stretch reads HMRKLRKRVLR. Residue 168–171 participates in heparin binding; the sequence is LRKR. The tract at residues 216–296 is lipid-binding and lipoprotein association; sequence NAKVGALATQ…SWFEPLLEDM (81 aa). Position 235–242 (235–242) interacts with heparin; it reads GQQLRGQL. Residues 272 to 323 are homooligomerization; sequence DQIRQKAEAFQARLKSWFEPLLEDMQRQWDGLVEKVQAAVATIPTSKPVEEP. The segment at 284 to 296 is specificity for association with VLDL; that stretch reads RLKSWFEPLLEDM.

The protein belongs to the apolipoprotein A1/A4/E family. As to quaternary structure, homotetramer. May interact with ABCA1; functionally associated with ABCA1 in the biogenesis of HDLs. May interact with APP/A4 amyloid-beta peptide; the interaction is extremely stable in vitro but its physiological significance is unclear. May interact with MAPT. May interact with MAP2. In the cerebrospinal fluid, interacts with secreted SORL1. Interacts with PMEL; this allows the loading of PMEL luminal fragment on ILVs to induce fibril nucleation. Post-translationally, APOE exists as multiple glycosylated and sialylated glycoforms within cells and in plasma. The extent of glycosylation and sialylation are tissue and context specific. In terms of processing, glycated in plasma VLDL. Phosphorylated by FAM20C in the extracellular medium.

Its subcellular location is the secreted. It localises to the extracellular space. The protein localises to the extracellular matrix. It is found in the extracellular vesicle. The protein resides in the endosome. Its subcellular location is the multivesicular body. APOE is an apolipoprotein, a protein associating with lipid particles, that mainly functions in lipoprotein-mediated lipid transport between organs via the plasma and interstitial fluids. APOE is a core component of plasma lipoproteins and is involved in their production, conversion and clearance. Apolipoproteins are amphipathic molecules that interact both with lipids of the lipoprotein particle core and the aqueous environment of the plasma. As such, APOE associates with chylomicrons, chylomicron remnants, very low density lipoproteins (VLDL) and intermediate density lipoproteins (IDL) but shows a preferential binding to high-density lipoproteins (HDL). It also binds a wide range of cellular receptors including the LDL receptor/LDLR and the very low-density lipoprotein receptor/VLDLR that mediate the cellular uptake of the APOE-containing lipoprotein particles. Finally, APOE also has a heparin-binding activity and binds heparan-sulfate proteoglycans on the surface of cells, a property that supports the capture and the receptor-mediated uptake of APOE-containing lipoproteins by cells. This chain is Apolipoprotein E (APOE), found in Canis lupus familiaris (Dog).